The sequence spans 152 residues: Deoxyuridine 5'-triphosphate nucleotidohydrolase (152 aa).

Substrate-binding positions include 71–73 (RSG), N84, 88–90 (LID), and M98.

This sequence belongs to the dUTPase family. Requires Mg(2+) as cofactor.

It catalyses the reaction dUTP + H2O = dUMP + diphosphate + H(+). It functions in the pathway pyrimidine metabolism; dUMP biosynthesis; dUMP from dCTP (dUTP route): step 2/2. This enzyme is involved in nucleotide metabolism: it produces dUMP, the immediate precursor of thymidine nucleotides and it decreases the intracellular concentration of dUTP so that uracil cannot be incorporated into DNA. In Shewanella denitrificans (strain OS217 / ATCC BAA-1090 / DSM 15013), this protein is Deoxyuridine 5'-triphosphate nucleotidohydrolase.